We begin with the raw amino-acid sequence, 230 residues long: Cyclin-dependent kinase inhibitor rum1 (230 aa).

3 disordered regions span residues 1 to 25 (MEPS…SFKG), 43 to 118 (PESD…DGLY), and 188 to 230 (SRVP…NLLR). Phosphothreonine; by MAPK is present on T13. Residue S19 is modified to Phosphoserine; by MAPK. A phosphothreonine; by cdc2 mark is found at T58 and T62. Residues 67-147 (LLPNLMLQDR…TFKPKLLFAD (81 aa)) form a CDK inhibitory and cyclin-binding region. Residues 78–91 (NSLERCMEEDREHN) show a composition bias toward basic and acidic residues. Residues 93 to 102 (FLSSSDNQLL) show a composition bias toward polar residues. Residues 101–230 (LLSRKKRKPT…KDENRHNLLR (130 aa)) are required for activity as a cdc2 kinase inhibitor. The segment covering 188–199 (SRVPSSSSGSFV) has biased composition (low complexity). Residues 219-230 (NTKDENRHNLLR) show a composition bias toward basic and acidic residues.

Interacts with cdc13, cig2 and pop1. In terms of processing, phosphorylated by cig1-associated cdc2 which leads to increased stability. Phosphorylation by MAPK reduces cdc2 kinase inhibitor ability.

Its subcellular location is the nucleus. Functionally, regulator of cell cycle G1 phase progression. Ensures the correct sequence of S phase and mitosis in the cell by acting as an inhibitor of the cdc2 mitotic kinase. Probably interacts with cdc2 to inhibit its action until the cell mass for Start is reached. Determines the length of the pre-Start G1 period and prevents mitosis from happening in early G1 cells. Required for maintaining pheromone-induced G1 arrest. Acts as an adapter protein since interaction with cdc13 promotes cyclin proteolysis during G1. Becomes a target for degradation at the G1/S phase transition, following phosphorylation by cig1-associated cdc2 at the G1/S phase transition. The sequence is that of Cyclin-dependent kinase inhibitor rum1 (rum1) from Schizosaccharomyces pombe (strain 972 / ATCC 24843) (Fission yeast).